A 145-amino-acid chain; its full sequence is MSRFLSNATNRIDAKGRVSVPSAFRSVLAQRNVQELYCFQDFVFPAISIGGPDLLERFERQIAAEDPFSPDANEMSLLIHGGGVFMKLDAEGRLMVTDFIRGFTGISDEVTFVGRADHFQLWQPQAFVAAQAQARGERKLAGKRS.

SpoVT-AbrB domains are found at residues 7–54 (NATN…GPDL) and 83–126 (GVFM…QPQA).

The protein belongs to the MraZ family. In terms of assembly, forms oligomers.

It localises to the cytoplasm. The protein localises to the nucleoid. This chain is Transcriptional regulator MraZ, found in Rhizobium johnstonii (strain DSM 114642 / LMG 32736 / 3841) (Rhizobium leguminosarum bv. viciae).